We begin with the raw amino-acid sequence, 430 residues long: Histidine--tRNA ligase (430 aa).

Belongs to the class-II aminoacyl-tRNA synthetase family. In terms of assembly, homodimer.

Its subcellular location is the cytoplasm. The enzyme catalyses tRNA(His) + L-histidine + ATP = L-histidyl-tRNA(His) + AMP + diphosphate + H(+). This is Histidine--tRNA ligase (hisS) from Clostridium acetobutylicum (strain ATCC 824 / DSM 792 / JCM 1419 / IAM 19013 / LMG 5710 / NBRC 13948 / NRRL B-527 / VKM B-1787 / 2291 / W).